Consider the following 33-residue polypeptide: Brevinin-2PTb (33 aa).

Cysteines 27 and 33 form a disulfide.

Expressed by the skin glands.

The protein localises to the secreted. In terms of biological role, has antibacterial activity against the Gram-positive bacterium S.aureus ATCC 25923 (MIC=9 uM) and the Gram-negative bacterium E.coli ATCC 25726 (MIC=9 uM). The polypeptide is Brevinin-2PTb (Pulchrana picturata (Malaysian fire frog)).